A 133-amino-acid polypeptide reads, in one-letter code: Small ribosomal subunit protein uS9 (133 aa).

Residues 102-133 (KPKGLLTRDPREVERKKYGLKKARRAPQFSKR) are disordered. Basic and acidic residues predominate over residues 107-118 (LTRDPREVERKK). Residues 119 to 133 (YGLKKARRAPQFSKR) show a composition bias toward basic residues.

Belongs to the universal ribosomal protein uS9 family.

In Deinococcus deserti (strain DSM 17065 / CIP 109153 / LMG 22923 / VCD115), this protein is Small ribosomal subunit protein uS9.